Here is a 358-residue protein sequence, read N- to C-terminus: Dual-specificity RNA methyltransferase RlmN (358 aa).

Catalysis depends on E91, which acts as the Proton acceptor. Positions 102–337 constitute a Radical SAM core domain; that stretch reads GNIRITQCLS…TILRKSKGQD (236 aa). The cysteines at positions 109 and 342 are disulfide-linked. [4Fe-4S] cluster contacts are provided by C116, C120, and C123. Residues 169 to 170, S201, 223 to 225, and N299 contribute to the S-adenosyl-L-methionine site; these read GE and SLH. C342 functions as the S-methylcysteine intermediate in the catalytic mechanism.

This sequence belongs to the radical SAM superfamily. RlmN family. [4Fe-4S] cluster is required as a cofactor.

The protein resides in the cytoplasm. The catalysed reaction is adenosine(2503) in 23S rRNA + 2 reduced [2Fe-2S]-[ferredoxin] + 2 S-adenosyl-L-methionine = 2-methyladenosine(2503) in 23S rRNA + 5'-deoxyadenosine + L-methionine + 2 oxidized [2Fe-2S]-[ferredoxin] + S-adenosyl-L-homocysteine. The enzyme catalyses adenosine(37) in tRNA + 2 reduced [2Fe-2S]-[ferredoxin] + 2 S-adenosyl-L-methionine = 2-methyladenosine(37) in tRNA + 5'-deoxyadenosine + L-methionine + 2 oxidized [2Fe-2S]-[ferredoxin] + S-adenosyl-L-homocysteine. Functionally, specifically methylates position 2 of adenine 2503 in 23S rRNA and position 2 of adenine 37 in tRNAs. m2A2503 modification seems to play a crucial role in the proofreading step occurring at the peptidyl transferase center and thus would serve to optimize ribosomal fidelity. The chain is Dual-specificity RNA methyltransferase RlmN from Lawsonia intracellularis (strain PHE/MN1-00).